Consider the following 132-residue polypeptide: Small ribosomal subunit protein uS11 (132 aa).

Residues 108–132 (GRIEDVTPVPHDSCRPKGGRRGRRV) form a disordered region.

It belongs to the universal ribosomal protein uS11 family. In terms of assembly, part of the 30S ribosomal subunit.

Its function is as follows. Located on the platform of the 30S subunit. The protein is Small ribosomal subunit protein uS11 of Methanoregula boonei (strain DSM 21154 / JCM 14090 / 6A8).